Reading from the N-terminus, the 376-residue chain is Mitogen-activated protein kinase ERK-A (376 aa).

In terms of domain architecture, Protein kinase spans 38–326 (YIKLAYIGEG…VEEALAHPYL (289 aa)). Residues 44–52 (IGEGAYGMV) and lysine 67 contribute to the ATP site. The active-site Proton acceptor is aspartate 162. Position 198 is a phosphothreonine (threonine 198). The TXY signature appears at 198–200 (TEY). Phosphotyrosine is present on tyrosine 200.

Belongs to the protein kinase superfamily. CMGC Ser/Thr protein kinase family. MAP kinase subfamily. Requires Mg(2+) as cofactor. Post-translationally, dually phosphorylated on Thr-198 and Tyr-200, which activates the enzyme. Phosphorylated on tyrosine residue(s) in response to insulin. In third instar larvae, expressed in eye imaginal disks. In adults, expressed in head and body.

It localises to the cytoplasm. The protein localises to the nucleus. It carries out the reaction L-seryl-[protein] + ATP = O-phospho-L-seryl-[protein] + ADP + H(+). It catalyses the reaction L-threonyl-[protein] + ATP = O-phospho-L-threonyl-[protein] + ADP + H(+). With respect to regulation, activated by tyrosine and threonine phosphorylation. Serine/threonine kinase which acts as an essential component of the MAP kinase signal transduction pathway to regulate proliferation, differentiation and effect cell fate decisions in various tissues. Required downstream of phl/Raf in the sev/sevenless, tor/torso, and EGF receptor homolog Egfr signal transduction pathways. Required for embryonic epithelial tissue repair. During larval development, mediates Ptth/tor signaling leading to the production of ecdysone, a hormone required for the initiation of metamorphosis. The sequence is that of Mitogen-activated protein kinase ERK-A from Drosophila melanogaster (Fruit fly).